The sequence spans 416 residues: RNA-editing ligase 2, mitochondrial (416 aa).

A mitochondrion-targeting transit peptide spans 1–17; that stretch reads MLRRLGVRHFRRTPLLF. ATP contacts are provided by residues 29-31, 56-62, Arg79, Glu126, Phe173, and 269-271; these read TEI, EKVHGAN, and KFK. Lys57 functions as the N6-AMP-lysine intermediate in the catalytic mechanism.

It belongs to the RNA ligase 2 family. As to quaternary structure, component of the RNA editing complex, a 1600 kDa complex composed of at least 20 proteins.

The protein resides in the mitochondrion. It carries out the reaction ATP + (ribonucleotide)n-3'-hydroxyl + 5'-phospho-(ribonucleotide)m = (ribonucleotide)n+m + AMP + diphosphate.. Functionally, RNA editing in kinetoplastid mitochondria inserts and deletes uridylates at multiple sites in pre-mRNAs as directed by guide RNAs. The sequence is that of RNA-editing ligase 2, mitochondrial (REL2) from Trypanosoma brucei brucei (strain 927/4 GUTat10.1).